The following is a 466-amino-acid chain: MSKVATRFAPSPTGALHIGGVRTALFNWLYSKNKNGTFHLRIEDTDKERSKDEHKIQIIKSLKWIGIDHDGDEYIQSTKINDHVNVANELLKNGHAYKCYCSSAEIEEQKKRARQKKLPYVYNRKCRDLQETNAPTIIKPVIRFKIKIEGTSVLKDLVQGDVEIENTTIEDFIILRNDGTPTYNLSATVDDHQMKMTHIIRGDDHKINTFKQMQIYLAMSWDLPNFAHIPLIHTIEGKKLSKRDNASTLDDYSKIGIMPDALRNYLLRLGWSYQDKEIFTLKESIELFNLEGIGKSPSKLDMSRILSLNEHYIKTINENELYDHLVKYCEIYKEKIKPEKETKIKPSLIFLKNKAKTLEDIFNNAKYIIFDDVKFEDKDLELIDDKAKSIIKEFKEKLISINTLNKETLEPIVNDLIKKYETNFKGVGQPLRIALTGSKFGPGLYDIIISLGNEEVERRLGNKIII.

Positions 10-20 (PSPTGALHIGG) match the 'HIGH' region motif. The Zn(2+) site is built by cysteine 99, cysteine 101, cysteine 126, and aspartate 128. The 'KMSKS' region signature appears at 239–243 (KLSKR). Position 242 (lysine 242) interacts with ATP.

Belongs to the class-I aminoacyl-tRNA synthetase family. Glutamate--tRNA ligase type 1 subfamily. Monomer. Zn(2+) is required as a cofactor.

Its subcellular location is the cytoplasm. The enzyme catalyses tRNA(Glu) + L-glutamate + ATP = L-glutamyl-tRNA(Glu) + AMP + diphosphate. Its function is as follows. Catalyzes the attachment of glutamate to tRNA(Glu) in a two-step reaction: glutamate is first activated by ATP to form Glu-AMP and then transferred to the acceptor end of tRNA(Glu). The chain is Glutamate--tRNA ligase from Pelagibacter ubique (strain HTCC1062).